A 275-amino-acid polypeptide reads, in one-letter code: Adaptin ear-binding coat-associated protein 1 (275 aa).

Residues 168-275 form a disordered region; it reads AKKGGASKPR…APQPSNWVQF (108 aa). Residues 187-201 are compositionally biased toward pro residues; sequence LPPPPGGKVTIPPPS. Thr-211 is subject to Phosphothreonine. Low complexity predominate over residues 233 to 248; sequence SPAPVSTSAPAPVSTS. Short sequence motifs (WXXF motif) lie at residues 252-255 and 272-275; these read WGDF and WVQF. Over residues 256-275 the composition is skewed to polar residues; it reads STASSSVPNQAPQPSNWVQF.

The protein belongs to the NECAP family. As to quaternary structure, interacts with AP1G1 and AP2A1 components of the adapter protein complexes AP-1 and AP-2. Interacts with the GAE domain proteins GGA1, GGA2 and GGA3. Expressed primarily in brain (at protein level).

The protein localises to the cytoplasmic vesicle. It is found in the clathrin-coated vesicle membrane. It localises to the cell membrane. Involved in endocytosis. This Mus musculus (Mouse) protein is Adaptin ear-binding coat-associated protein 1 (Necap1).